We begin with the raw amino-acid sequence, 118 residues long: Large ribosomal subunit protein uL22 (118 aa).

Belongs to the universal ribosomal protein uL22 family. As to quaternary structure, part of the 50S ribosomal subunit.

This protein binds specifically to 23S rRNA; its binding is stimulated by other ribosomal proteins, e.g. L4, L17, and L20. It is important during the early stages of 50S assembly. It makes multiple contacts with different domains of the 23S rRNA in the assembled 50S subunit and ribosome. In terms of biological role, the globular domain of the protein is located near the polypeptide exit tunnel on the outside of the subunit, while an extended beta-hairpin is found that lines the wall of the exit tunnel in the center of the 70S ribosome. This is Large ribosomal subunit protein uL22 from Chlorobium limicola (strain DSM 245 / NBRC 103803 / 6330).